A 502-amino-acid polypeptide reads, in one-letter code: ATP synthase subunit alpha (502 aa).

The interval 114 to 139 (PIDGRGPIETSKTRPIESPAPGVMDR) is disordered. Residue 169-176 (GDRQTGKT) coordinates ATP.

Belongs to the ATPase alpha/beta chains family. As to quaternary structure, F-type ATPases have 2 components, CF(1) - the catalytic core - and CF(0) - the membrane proton channel. CF(1) has five subunits: alpha(3), beta(3), gamma(1), delta(1), epsilon(1). CF(0) has three main subunits: a(1), b(2) and c(9-12). The alpha and beta chains form an alternating ring which encloses part of the gamma chain. CF(1) is attached to CF(0) by a central stalk formed by the gamma and epsilon chains, while a peripheral stalk is formed by the delta and b chains.

The protein resides in the cell membrane. It carries out the reaction ATP + H2O + 4 H(+)(in) = ADP + phosphate + 5 H(+)(out). Functionally, produces ATP from ADP in the presence of a proton gradient across the membrane. The alpha chain is a regulatory subunit. The sequence is that of ATP synthase subunit alpha from Halalkalibacterium halodurans (strain ATCC BAA-125 / DSM 18197 / FERM 7344 / JCM 9153 / C-125) (Bacillus halodurans).